Consider the following 409-residue polypeptide: Na(+)-translocating NADH-quinone reductase subunit F (409 aa).

Residues 5–25 traverse the membrane as a helical segment; that stretch reads FIFGIGAFTAIVLVLAVVILI. A 2Fe-2S ferredoxin-type domain is found at 34–128; that stretch reads GDITISINND…SMDVELPEEV (95 aa). 4 residues coordinate [2Fe-2S] cluster: Cys-71, Cys-77, Cys-80, and Cys-112. Residues 131-271 form the FAD-binding FR-type domain; it reads VKKWECTVIS…SGPFGEFFAK (141 aa).

It belongs to the NqrF family. Composed of six subunits; NqrA, NqrB, NqrC, NqrD, NqrE and NqrF. It depends on [2Fe-2S] cluster as a cofactor. FAD serves as cofactor.

The protein resides in the cell inner membrane. It catalyses the reaction a ubiquinone + n Na(+)(in) + NADH + H(+) = a ubiquinol + n Na(+)(out) + NAD(+). Functionally, NQR complex catalyzes the reduction of ubiquinone-1 to ubiquinol by two successive reactions, coupled with the transport of Na(+) ions from the cytoplasm to the periplasm. The first step is catalyzed by NqrF, which accepts electrons from NADH and reduces ubiquinone-1 to ubisemiquinone by a one-electron transfer pathway. The protein is Na(+)-translocating NADH-quinone reductase subunit F of Mannheimia succiniciproducens (strain KCTC 0769BP / MBEL55E).